The primary structure comprises 120 residues: NAD(P)H-quinone oxidoreductase subunit 3, chloroplastic (120 aa).

Transmembrane regions (helical) follow at residues 10 to 30 (FWFF…TSKL), 64 to 84 (MFAL…PWAM), and 89 to 109 (LGVY…IGLV).

Belongs to the complex I subunit 3 family. In terms of assembly, NDH is composed of at least 16 different subunits, 5 of which are encoded in the nucleus.

It localises to the plastid. Its subcellular location is the chloroplast thylakoid membrane. It catalyses the reaction a plastoquinone + NADH + (n+1) H(+)(in) = a plastoquinol + NAD(+) + n H(+)(out). The enzyme catalyses a plastoquinone + NADPH + (n+1) H(+)(in) = a plastoquinol + NADP(+) + n H(+)(out). Functionally, NDH shuttles electrons from NAD(P)H:plastoquinone, via FMN and iron-sulfur (Fe-S) centers, to quinones in the photosynthetic chain and possibly in a chloroplast respiratory chain. The immediate electron acceptor for the enzyme in this species is believed to be plastoquinone. Couples the redox reaction to proton translocation, and thus conserves the redox energy in a proton gradient. The chain is NAD(P)H-quinone oxidoreductase subunit 3, chloroplastic from Chaetosphaeridium globosum (Charophycean green alga).